The following is a 622-amino-acid chain: Chaperone protein HscA homolog (622 aa).

The protein belongs to the heat shock protein 70 family.

Functionally, chaperone involved in the maturation of iron-sulfur cluster-containing proteins. Has a low intrinsic ATPase activity which is markedly stimulated by HscB. The polypeptide is Chaperone protein HscA homolog (Burkholderia cenocepacia (strain HI2424)).